A 501-amino-acid polypeptide reads, in one-letter code: Dipeptide and tripeptide permease A (501 aa).

The Cytoplasmic portion of the chain corresponds to 1-21 (MSTANKKPTESVSLNAFKQPK). The helical transmembrane segment at 22–44 (AFYLIFSIELWERFGYYGLQGIM) threads the bilayer. The Periplasmic portion of the chain corresponds to 45-59 (AVYLVKQLGMSEADS). A helical membrane pass occupies residues 60–80 (ITLFSSFSALVYGLVAIGGWL). At 81–89 (GDKILGTKR) the chain is on the cytoplasmic side. The chain crosses the membrane as a helical span at residues 90–110 (VIMLGAVVLAIGYALVAWSGH). A topological domain (periplasmic) is located at residue D111. The chain crosses the membrane as a helical span at residues 112-132 (AGIVYMGMAAIAVGNGLFKAN). At 133 to 153 (PSSLLSTCYAKDDPRLDGAFT) the chain is on the cytoplasmic side. A helical transmembrane segment spans residues 154 to 174 (MYYMSVNIGSFFSMLATPWLA). Residues 175-178 (ARYG) are Periplasmic-facing. A helical membrane pass occupies residues 179 to 199 (WSTAFALSVVGMLITVVNFAF). Over 200–219 (CQRWVKSYGSKPDFEPINFR) the chain is Cytoplasmic. A helical membrane pass occupies residues 220–240 (NLLLTIVGIVVLIAVATWLLH). At 241 to 246 (NQDIAR) the chain is on the periplasmic side. A helical membrane pass occupies residues 247-267 (MVLGVIALGIVIIFGKEAFSM). Residues 268 to 274 (HGAARRK) are Cytoplasmic-facing. The helical transmembrane segment at 275-295 (MIVAFILMLQAIIFFVLYSQM) threads the bilayer. Residues 296-320 (PTSLNFFAIRNVEHSILGIAFEPEQ) are Periplasmic-facing. The chain crosses the membrane as a helical span at residues 321–341 (YQALNPFWIIIGSPILAAIYN). Topologically, residues 342 to 352 (RMGDTLPMPMK) are cytoplasmic. Residues 353-373 (FAIGMVLCSGAFLILPLGAKF) form a helical membrane-spanning segment. The Periplasmic portion of the chain corresponds to 374–383 (ANDAGIVSVN). The chain crosses the membrane as a helical span at residues 384–404 (WLIASYGLQSIGELMISGLGL). The Cytoplasmic segment spans residues 405 to 414 (AMVAQLVPQR). Residues 415–435 (LMGFIMGSWFLTTAGANIIGG) form a helical membrane-spanning segment. The Periplasmic segment spans residues 436-459 (YVANLMAVPSDVTDPLMSLEVYGR). Residues 460 to 480 (VFMQIGIATAVIAVLMLLTAP) traverse the membrane as a helical segment. Residues 481–501 (KLNRMTQDDDTAEKGSKAATV) are Cytoplasmic-facing.

The protein belongs to the major facilitator superfamily. Proton-dependent oligopeptide transporter (POT/PTR) (TC 2.A.17) family. DtpA subfamily.

It localises to the cell inner membrane. Functionally, proton-dependent permease that transports di- and tripeptides. This is Dipeptide and tripeptide permease A from Salmonella typhimurium (strain LT2 / SGSC1412 / ATCC 700720).